The chain runs to 108 residues: Large ribosomal subunit protein eL32 (108 aa).

Basic residues predominate over residues Arg-21–Met-30. The segment at Arg-21 to Gly-44 is disordered.

Belongs to the eukaryotic ribosomal protein eL32 family.

This is Large ribosomal subunit protein eL32 (rpl32e) from Methanothermobacter thermautotrophicus (strain ATCC 29096 / DSM 1053 / JCM 10044 / NBRC 100330 / Delta H) (Methanobacterium thermoautotrophicum).